The sequence spans 215 residues: UPF0502 protein YceH (215 aa).

An N6-acetyllysine modification is found at Lys80.

The protein belongs to the UPF0502 family.

The chain is UPF0502 protein YceH from Shigella boydii serotype 4 (strain Sb227).